Consider the following 75-residue polypeptide: Small ribosomal subunit protein bS18 (75 aa).

The protein belongs to the bacterial ribosomal protein bS18 family. In terms of assembly, part of the 30S ribosomal subunit. Forms a tight heterodimer with protein bS6.

Its function is as follows. Binds as a heterodimer with protein bS6 to the central domain of the 16S rRNA, where it helps stabilize the platform of the 30S subunit. The sequence is that of Small ribosomal subunit protein bS18 from Vibrio atlanticus (strain LGP32) (Vibrio splendidus (strain Mel32)).